Here is a 611-residue protein sequence, read N- to C-terminus: Polyphenol oxidase 4 (611 aa).

Residues H57, H82, H91, H251, H255, and H283 each contribute to the Cu cation site. The segment at residues 80–82 (CTH) is a cross-link (2'-(S-cysteinyl)-histidine (Cys-His)). A substrate-binding site is contributed by H255. A propeptide spans 380 to 611 (IKKSEGGKNP…GGLGALGRIF (232 aa)) (removed in mature form).

The protein belongs to the tyrosinase family. Heterotetramer. Cu(2+) serves as cofactor. In terms of processing, the C-ter is probably cleaved after Gly-379 since the mature active protein is smaller than the protein encoded by the gene.

The catalysed reaction is 2 L-dopa + O2 = 2 L-dopaquinone + 2 H2O. The enzyme catalyses L-tyrosine + O2 = L-dopaquinone + H2O. Copper-containing oxidase that catalyzes both the o-hydroxylation of monophenols and the subsequent oxidation of the resulting o-diphenols into reactive o-quinones, which evolve spontaneously to produce intermediates, which associate in dark brown pigments. Involved in the initial step of melanin synthesis. Melanins constitute a mechanism of defense and resistance to stress such as UV radiations, free radicals, gamma rays, dehydratation and extreme temperatures, and contribute to the fungal cell-wall resistance against hydrolytic enzymes in avoiding cellular lysis. Fungal pigments are also involved in the formation and stability of spores. This chain is Polyphenol oxidase 4 (PPO4), found in Agaricus bisporus (White button mushroom).